The sequence spans 271 residues: Phosphatidylglycerol--prolipoprotein diacylglyceryl transferase (271 aa).

The next 7 helical transmembrane spans lie at 25–45, 60–80, 103–123, 134–154, 181–201, 209–229, and 235–255; these read WYGIMYDVALLLALLLAKFFV, YFIWVEIGVILGARLGYILIY, FVGIRGMSYHGAIIGFLIATL, WIFLDLVALSVPLAYVFGRIG, PSQFYEAFLEGIVVFIIVYLA, GELILVYAGAYSLARFICEFY, and GIGFVLWGMSMGQILSFIMFI. Arg152 contributes to the a 1,2-diacyl-sn-glycero-3-phospho-(1'-sn-glycerol) binding site.

The protein belongs to the Lgt family.

Its subcellular location is the cell inner membrane. The enzyme catalyses L-cysteinyl-[prolipoprotein] + a 1,2-diacyl-sn-glycero-3-phospho-(1'-sn-glycerol) = an S-1,2-diacyl-sn-glyceryl-L-cysteinyl-[prolipoprotein] + sn-glycerol 1-phosphate + H(+). Its pathway is protein modification; lipoprotein biosynthesis (diacylglyceryl transfer). Its function is as follows. Catalyzes the transfer of the diacylglyceryl group from phosphatidylglycerol to the sulfhydryl group of the N-terminal cysteine of a prolipoprotein, the first step in the formation of mature lipoproteins. The polypeptide is Phosphatidylglycerol--prolipoprotein diacylglyceryl transferase (Campylobacter jejuni subsp. doylei (strain ATCC BAA-1458 / RM4099 / 269.97)).